The following is a 201-amino-acid chain: LexA repressor (201 aa).

Residues 28–48 constitute a DNA-binding region (H-T-H motif); that stretch reads RAEIANQLGFRSANAAEEHLK. Residues serine 118 and lysine 155 each act as for autocatalytic cleavage activity in the active site.

The protein belongs to the peptidase S24 family. In terms of assembly, homodimer.

It catalyses the reaction Hydrolysis of Ala-|-Gly bond in repressor LexA.. Functionally, represses a number of genes involved in the response to DNA damage (SOS response), including recA and lexA. In the presence of single-stranded DNA, RecA interacts with LexA causing an autocatalytic cleavage which disrupts the DNA-binding part of LexA, leading to derepression of the SOS regulon and eventually DNA repair. In Saccharophagus degradans (strain 2-40 / ATCC 43961 / DSM 17024), this protein is LexA repressor.